The chain runs to 512 residues: 2,3-bisphosphoglycerate-independent phosphoglycerate mutase (512 aa).

Positions 11 and 61 each coordinate Mn(2+). Ser-61 (phosphoserine intermediate) is an active-site residue. Substrate is bound by residues His-122, 152-153 (RD), Arg-184, Arg-190, 259-262 (RADR), and Lys-332. 5 residues coordinate Mn(2+): Asp-399, His-403, Asp-440, His-441, and His-459.

This sequence belongs to the BPG-independent phosphoglycerate mutase family. Monomer. Mn(2+) serves as cofactor.

It catalyses the reaction (2R)-2-phosphoglycerate = (2R)-3-phosphoglycerate. Its pathway is carbohydrate degradation; glycolysis; pyruvate from D-glyceraldehyde 3-phosphate: step 3/5. Its function is as follows. Catalyzes the interconversion of 2-phosphoglycerate and 3-phosphoglycerate. This is 2,3-bisphosphoglycerate-independent phosphoglycerate mutase from Francisella tularensis subsp. holarctica (strain FTNF002-00 / FTA).